Here is a 602-residue protein sequence, read N- to C-terminus: MSIFSLYTRVLELLGKEARLGWLLAFANLLLAASQFAEPVLFGRIVDVLSGKSVAGSSSAWPFLAAWVAFGLFTIACSALVALQADRLSHRQRQAVLTDYFEHILQLPLTFHSGTHSGRLMKVMLNGTDALWRLWLGFFREHFAAILSVVVLLPLSLYLNWRLAILLFVLCIVFTALTTFVVRRTFGMQMAVEEHYSELSARASDALGNVALVQSFVRVESEVQGLRSVANQLLEAQMPVLSWWALVTVITRASTTITVLAIFTLGIALHDQGLTSVGEIVMFVSFATLLIQKLEQVVSFINNVFMEAPRLREFFNVLDAVPAVHDRPDAIDAGRLSGLVEFNDVTFSYDGKRPAVEDLSFTALPGQTVALVGPTGAGKSTAIALLHRAFDPQSGFIRIDGMDVRGVTLTSLRRNIGVVFQEALLFNRSIAENLRVGKPDATEAEMRKAAERAQALEFIERSGGFETNAGERGRMLSGGERQRLSIARALLKDPPILILDEATSALDAVTEVKVNAALDEVMRGRTTFVIAHRLATIRNATRILVFENGRVTESGTFDELVAKGGHFAELARAQFMVQEQSRANTRASVTAAETIATAAKSP.

In terms of domain architecture, ABC transmembrane type-1 spans 21–306 (GWLLAFANLL…VVSFINNVFM (286 aa)). The next 6 membrane-spanning stretches (helical) occupy residues 22–42 (WLLA…PVLF), 63–83 (FLAA…LVAL), 141–161 (EHFA…YLNW), 163–183 (LAIL…FVVR), 240–262 (VLSW…VLAI), and 280–300 (IVMF…VVSF). The ABC transporter domain maps to 340-573 (VEFNDVTFSY…GGHFAELARA (234 aa)). 373–380 (GPTGAGKS) lines the ATP pocket.

This sequence belongs to the ABC transporter superfamily. Beta-(1--&gt;2)glucan exporter (TC 3.A.1.108.1) family. As to quaternary structure, homodimer.

The protein localises to the cell inner membrane. The enzyme catalyses [(1-&gt;2)-beta-D-glucosyl](n)(in) + ATP + H2O = [(1-&gt;2)-beta-D-glucosyl](n)(out) + ADP + phosphate + H(+). In terms of biological role, involved in beta-(1--&gt;2)glucan export. Transmembrane domains (TMD) form a pore in the inner membrane and the ATP-binding domain (NBD) is responsible for energy generation. The polypeptide is Beta-(1--&gt;2)glucan export ATP-binding/permease protein NdvA (Bradyrhizobium diazoefficiens (strain JCM 10833 / BCRC 13528 / IAM 13628 / NBRC 14792 / USDA 110)).